The sequence spans 277 residues: Putative phosphoenolpyruvate synthase regulatory protein (277 aa).

An ADP-binding site is contributed by 157–164; that stretch reads GVSRCGKT.

The protein belongs to the pyruvate, phosphate/water dikinase regulatory protein family. PSRP subfamily.

It carries out the reaction [pyruvate, water dikinase] + ADP = [pyruvate, water dikinase]-phosphate + AMP + H(+). It catalyses the reaction [pyruvate, water dikinase]-phosphate + phosphate + H(+) = [pyruvate, water dikinase] + diphosphate. Bifunctional serine/threonine kinase and phosphorylase involved in the regulation of the phosphoenolpyruvate synthase (PEPS) by catalyzing its phosphorylation/dephosphorylation. The sequence is that of Putative phosphoenolpyruvate synthase regulatory protein from Photobacterium profundum (strain SS9).